We begin with the raw amino-acid sequence, 207 residues long: Ras-related protein RABH1e (207 aa).

Residue 16 to 23 coordinates GTP; that stretch reads GDQSVGKT. Positions 38–46 match the Effector region motif; the sequence is YQATIGIDF. GTP contacts are provided by residues 64–68, 122–125, and 152–153; these read DTAGQ, NKTD, and SA. 2 S-geranylgeranyl cysteine lipidation sites follow: C205 and C207. At C207 the chain carries Cysteine methyl ester.

Belongs to the small GTPase superfamily. Rab family.

It localises to the golgi apparatus membrane. Protein transport. Regulator of membrane traffic from the Golgi apparatus towards the endoplasmic reticulum (ER). This chain is Ras-related protein RABH1e (RABH1E), found in Arabidopsis thaliana (Mouse-ear cress).